Reading from the N-terminus, the 294-residue chain is 4-hydroxy-tetrahydrodipicolinate synthase (294 aa).

Thr-45 contributes to the pyruvate binding site. Tyr-133 serves as the catalytic Proton donor/acceptor. Residue Lys-162 is the Schiff-base intermediate with substrate of the active site. Ile-204 is a pyruvate binding site.

The protein belongs to the DapA family. As to quaternary structure, homotetramer; dimer of dimers.

It is found in the cytoplasm. The enzyme catalyses L-aspartate 4-semialdehyde + pyruvate = (2S,4S)-4-hydroxy-2,3,4,5-tetrahydrodipicolinate + H2O + H(+). The protein operates within amino-acid biosynthesis; L-lysine biosynthesis via DAP pathway; (S)-tetrahydrodipicolinate from L-aspartate: step 3/4. Is allosterically regulated by the feedback inhibitor (S)-lysine. Functionally, catalyzes the condensation of (S)-aspartate-beta-semialdehyde [(S)-ASA] and pyruvate to 4-hydroxy-tetrahydrodipicolinate (HTPA). This Agrobacterium fabrum (strain C58 / ATCC 33970) (Agrobacterium tumefaciens (strain C58)) protein is 4-hydroxy-tetrahydrodipicolinate synthase.